A 309-amino-acid chain; its full sequence is Methionyl-tRNA formyltransferase (309 aa).

S109–P112 is a binding site for (6S)-5,6,7,8-tetrahydrofolate.

It belongs to the Fmt family.

The catalysed reaction is L-methionyl-tRNA(fMet) + (6R)-10-formyltetrahydrofolate = N-formyl-L-methionyl-tRNA(fMet) + (6S)-5,6,7,8-tetrahydrofolate + H(+). Functionally, attaches a formyl group to the free amino group of methionyl-tRNA(fMet). The formyl group appears to play a dual role in the initiator identity of N-formylmethionyl-tRNA by promoting its recognition by IF2 and preventing the misappropriation of this tRNA by the elongation apparatus. The chain is Methionyl-tRNA formyltransferase from Clostridium novyi (strain NT).